Reading from the N-terminus, the 69-residue chain is Cytochrome c oxidase subunit 8A, mitochondrial (69 aa).

Residues methionine 1–glutamine 25 constitute a mitochondrion transit peptide. The SIFI-degron signature appears at serine 2–leucine 19. Over valine 26–glycine 36 the chain is Mitochondrial matrix. Residues threonine 37 to serine 60 form a helical membrane-spanning segment. Residues histidine 61–glutamate 69 are Mitochondrial intermembrane-facing.

The protein belongs to the cytochrome c oxidase VIII family. In terms of assembly, component of the cytochrome c oxidase (complex IV, CIV), a multisubunit enzyme composed of 14 subunits. The complex is composed of a catalytic core of 3 subunits MT-CO1, MT-CO2 and MT-CO3, encoded in the mitochondrial DNA, and 11 supernumerary subunits COX4I, COX5A, COX5B, COX6A, COX6B, COX6C, COX7A, COX7B, COX7C, COX8 and NDUFA4, which are encoded in the nuclear genome. The complex exists as a monomer or a dimer and forms supercomplexes (SCs) in the inner mitochondrial membrane with NADH-ubiquinone oxidoreductase (complex I, CI) and ubiquinol-cytochrome c oxidoreductase (cytochrome b-c1 complex, complex III, CIII), resulting in different assemblies (supercomplex SCI(1)III(2)IV(1) and megacomplex MCI(2)III(2)IV(2)). Post-translationally, in response to mitochondrial stress, the precursor protein is ubiquitinated by the SIFI complex in the cytoplasm before mitochondrial import, leading to its degradation. Within the SIFI complex, UBR4 initiates ubiquitin chain that are further elongated or branched by KCMF1.

Its subcellular location is the mitochondrion inner membrane. The protein operates within energy metabolism; oxidative phosphorylation. Component of the cytochrome c oxidase, the last enzyme in the mitochondrial electron transport chain which drives oxidative phosphorylation. The respiratory chain contains 3 multisubunit complexes succinate dehydrogenase (complex II, CII), ubiquinol-cytochrome c oxidoreductase (cytochrome b-c1 complex, complex III, CIII) and cytochrome c oxidase (complex IV, CIV), that cooperate to transfer electrons derived from NADH and succinate to molecular oxygen, creating an electrochemical gradient over the inner membrane that drives transmembrane transport and the ATP synthase. Cytochrome c oxidase is the component of the respiratory chain that catalyzes the reduction of oxygen to water. Electrons originating from reduced cytochrome c in the intermembrane space (IMS) are transferred via the dinuclear copper A center (CU(A)) of subunit 2 and heme A of subunit 1 to the active site in subunit 1, a binuclear center (BNC) formed by heme A3 and copper B (CU(B)). The BNC reduces molecular oxygen to 2 water molecules using 4 electrons from cytochrome c in the IMS and 4 protons from the mitochondrial matrix. The chain is Cytochrome c oxidase subunit 8A, mitochondrial (COX8A) from Eulemur fulvus fulvus (Brown lemur).